Consider the following 435-residue polypeptide: Serine/threonine-protein kinase 40 (435 aa).

The Protein kinase domain maps to 35 to 332 (FILGPRLGNS…DVLEALSAII (298 aa)). ATP-binding positions include 41–49 (LGNSPVPSI) and lysine 66. The active-site Proton acceptor is the aspartate 197.

Belongs to the protein kinase superfamily. CAMK Ser/Thr protein kinase family.

The protein resides in the nucleus. The protein localises to the cytoplasm. It catalyses the reaction L-seryl-[protein] + ATP = O-phospho-L-seryl-[protein] + ADP + H(+). It carries out the reaction L-threonyl-[protein] + ATP = O-phospho-L-threonyl-[protein] + ADP + H(+). May be a negative regulator of NF-kappa-B and p53-mediated gene transcription. The protein is Serine/threonine-protein kinase 40 (Stk40) of Rattus norvegicus (Rat).